Here is a 1748-residue protein sequence, read N- to C-terminus: Flagellar attachment zone protein 1 (1748 aa).

Coiled coils occupy residues 613 to 657 (REQE…KLQK), 684 to 864 (VTLD…HKVR), and 903 to 1663 (NDHM…SALE). 41 repeat units span residues 1012–1025 (EELE…EKLA), 1026–1039 (EELE…EKLA), 1040–1053 (EELE…EKLA), 1054–1067 (EALD…EKLA), 1068–1081 (EELE…EKLA), 1082–1095 (EELE…EKLA), 1096–1109 (EELE…EKLA), 1110–1123 (EELE…EKLA), 1124–1137 (EELE…EKLA), 1138–1151 (EELE…EKLA), 1152–1165 (EALD…EKLA), 1166–1179 (EELD…EKLA), 1180–1193 (EELE…EKLA), 1194–1207 (EELE…EKLA), 1208–1221 (EELE…EKLA), 1222–1235 (EELE…EKLA), 1236–1249 (EELE…EKLA), 1250–1263 (EELE…EKLA), 1264–1277 (EELE…EKLA), 1278–1291 (EELE…EKLA), 1292–1305 (EELE…EKLA), 1306–1319 (EELE…EKLA), 1320–1333 (EELE…EKLA), 1334–1347 (EELE…EKLA), 1348–1361 (EELE…EKLA), 1362–1375 (EELE…EKLA), 1376–1389 (EELE…EKLA), 1390–1403 (EELE…EKLA), 1404–1417 (EELE…EKLA), 1418–1431 (EELE…EKLA), 1432–1445 (EELE…EKLA), 1446–1459 (EELE…EKLA), 1460–1473 (EELE…EKLA), 1474–1487 (EELE…EKLA), 1488–1501 (EELE…EKLA), 1502–1515 (EELE…EKLA), 1516–1529 (EELE…EKLA), 1530–1543 (EELE…EKLA), 1544–1557 (EELE…EKLA), 1558–1571 (EELE…EKLA), and 1572–1585 (EELE…KRLA). The tract at residues 1012–1529 (EELELKAAEN…LKAAENEKLA (518 aa)) is 41 X 14 AA tandem repeats of E-E-L-E-L-K-[VA]-A-E-N-E-K-L-A.

The protein resides in the cell projection. It localises to the cilium. Its subcellular location is the flagellum. In terms of biological role, a component of FAZ filament that is required for correct FAZ assembly and attachment. Not essential for new flagellum growth. In Trypanosoma brucei gambiense (strain MHOM/CI/86/DAL972), this protein is Flagellar attachment zone protein 1.